A 428-amino-acid chain; its full sequence is UDP-N-acetylglucosamine 1-carboxyvinyltransferase (428 aa).

Position 25-26 (25-26) interacts with phosphoenolpyruvate; that stretch reads KN. Arginine 102 serves as a coordination point for UDP-N-acetyl-alpha-D-glucosamine. Catalysis depends on cysteine 126, which acts as the Proton donor. Residue cysteine 126 is modified to 2-(S-cysteinyl)pyruvic acid O-phosphothioketal. UDP-N-acetyl-alpha-D-glucosamine-binding residues include aspartate 316 and valine 338.

Belongs to the EPSP synthase family. MurA subfamily.

Its subcellular location is the cytoplasm. The enzyme catalyses phosphoenolpyruvate + UDP-N-acetyl-alpha-D-glucosamine = UDP-N-acetyl-3-O-(1-carboxyvinyl)-alpha-D-glucosamine + phosphate. Its pathway is cell wall biogenesis; peptidoglycan biosynthesis. Functionally, cell wall formation. Adds enolpyruvyl to UDP-N-acetylglucosamine. In Anaplasma marginale (strain St. Maries), this protein is UDP-N-acetylglucosamine 1-carboxyvinyltransferase.